The following is a 223-amino-acid chain: Mitochondrial cardiolipin hydrolase (223 aa).

The Mitochondrial intermembrane portion of the chain corresponds to 1 to 6 (MGCASS). A helical membrane pass occupies residues 7-24 (KEEVALTPLSDVNAAKEV). Residues 25–223 (ADLKAQVDQL…QFDKLWDMFK (199 aa)) lie on the Cytoplasmic side of the membrane. The PLD phosphodiesterase domain maps to 164-191 (TAAHMHHKFAIIDGRLLLNGSFNWTRQA). Residues histidine 169, lysine 171, and aspartate 176 contribute to the active site.

It belongs to the phospholipase D family. MitoPLD/Zucchini subfamily. As to quaternary structure, homodimer.

The protein resides in the mitochondrion outer membrane. Functionally, plays a critical role in PIWI-interacting RNA (piRNA) biogenesis. piRNAs provide essential protection against the activity of mobile genetic elements. piRNA-mediated transposon silencing is thus critical for maintaining genome stability. Backbone-non-specific, single strand-specific nuclease, cleaving either RNA or DNA substrates with similar affinity. Produces 5' phosphate and 3' hydroxyl termini, suggesting it could directly participate in the processing of primary piRNA transcripts. Has been proposed to act as a cardiolipin hydrolase to generate phosphatidic acid at mitochondrial surface. Although it cannot be excluded that it can act as a phospholipase in some circumstances, this activity could not be confirmed. The polypeptide is Mitochondrial cardiolipin hydrolase (Chlamydomonas reinhardtii (Chlamydomonas smithii)).